A 399-amino-acid chain; its full sequence is Elongation factor Tu (399 aa).

The region spanning Lys10 to Glu204 is the tr-type G domain. The tract at residues Gly19 to Thr26 is G1. Residue Gly19–Thr26 participates in GTP binding. Thr26 provides a ligand contact to Mg(2+). The tract at residues Gly60–Asn64 is G2. Residues Asp81–Gly84 form a G3 region. Residues Asp81–His85 and Asn136–Asp139 each bind GTP. The tract at residues Asn136–Asp139 is G4. A G5 region spans residues Ser174 to Leu176.

The protein belongs to the TRAFAC class translation factor GTPase superfamily. Classic translation factor GTPase family. EF-Tu/EF-1A subfamily. As to quaternary structure, monomer.

The protein resides in the cytoplasm. It catalyses the reaction GTP + H2O = GDP + phosphate + H(+). GTP hydrolase that promotes the GTP-dependent binding of aminoacyl-tRNA to the A-site of ribosomes during protein biosynthesis. In Prochlorococcus marinus (strain NATL1A), this protein is Elongation factor Tu.